The sequence spans 356 residues: Transcription factor MafB (356 aa).

Disordered stretches follow at residues Arg-49–Gln-79 and Tyr-140–Glu-240. Residues Ser-55–Thr-77 are compositionally biased toward low complexity. 2 stretches are compositionally biased toward basic residues: residues Ala-183–His-196 and His-212–Gly-223. Residues Arg-270–Lys-295 form a basic motif region. The 64-residue stretch at Arg-270 to Leu-333 folds into the bZIP domain. The interval Leu-298–Leu-319 is leucine-zipper.

This sequence belongs to the bZIP family. Maf subfamily. In terms of assembly, homodimer or heterodimer with other bHLH-Zip transcription factors. Binds DNA as a homodimer or a heterodimer.

It is found in the nucleus. In terms of biological role, may act as a transcriptional activator or repressor. Involved in neurogenesis. Involved in the development of rhombomeres (r) 5 and 6 segments from their common precursor 'proto-segment' in the hindbrain. This is Transcription factor MafB (mafb) from Danio rerio (Zebrafish).